The following is a 62-amino-acid chain: Prokaryotic ubiquitin-like protein Pup 2 (62 aa).

Positions 1 to 34 (MRQEKPKRHGREDDEPPEPAPAGRARDTTVGDDT) are disordered. The ARC ATPase binding stretch occupies residues 21–56 (PAGRARDTTVGDDTDELLDEIDGVLEENAVEFVRSY). Glutamate 62 participates in a covalent cross-link: Isoglutamyl lysine isopeptide (Glu-Lys) (interchain with K-? in acceptor proteins).

It belongs to the prokaryotic ubiquitin-like protein family. In terms of assembly, strongly interacts with the proteasome-associated ATPase ARC through a hydrophobic interface; the interacting region of Pup lies in its C-terminal half. There is one Pup binding site per ARC hexamer ring.

It participates in protein degradation; proteasomal Pup-dependent pathway. Functionally, protein modifier that is covalently attached to lysine residues of substrate proteins, thereby targeting them for proteasomal degradation. The tagging system is termed pupylation. The chain is Prokaryotic ubiquitin-like protein Pup 2 from Saccharopolyspora erythraea (strain ATCC 11635 / DSM 40517 / JCM 4748 / NBRC 13426 / NCIMB 8594 / NRRL 2338).